The primary structure comprises 1372 residues: DNA-directed RNA polymerase subunit beta (1372 aa).

Belongs to the RNA polymerase beta chain family. As to quaternary structure, the RNAP catalytic core consists of 2 alpha, 1 beta, 1 beta' and 1 omega subunit. When a sigma factor is associated with the core the holoenzyme is formed, which can initiate transcription.

The catalysed reaction is RNA(n) + a ribonucleoside 5'-triphosphate = RNA(n+1) + diphosphate. Its function is as follows. DNA-dependent RNA polymerase catalyzes the transcription of DNA into RNA using the four ribonucleoside triphosphates as substrates. The chain is DNA-directed RNA polymerase subunit beta from Psychrobacter sp. (strain PRwf-1).